Reading from the N-terminus, the 301-residue chain is Protein ARMCX6 (301 aa).

A mitochondrion outer membrane (MOM)-targeting sequence region spans residues 1 to 6; sequence MGRARE. The Mitochondrial intermembrane portion of the chain corresponds to 1–7; the sequence is MGRAREM. The helical; Signal-anchor transmembrane segment at 8–25 threads the bilayer; sequence GWMAAGLMIGAGACYCMY. The mitochondrion outer membrane (MOM)-targeting sequence stretch occupies residues 26–36; the sequence is KLTMGRSEGNE. Over 26–301 the chain is Cytoplasmic; that stretch reads KLTMGRSEGN…REMLVEAISP (276 aa). The segment at 69-101 is disordered; the sequence is WSEDGDWDEPGAPGGTEDRRSGGGKANRAHPIK.

The protein belongs to the eutherian X-chromosome-specific Armcx family. As to expression, highly expressed in the developing neural tissues, neural crest derivatives and hind limbs. Also widely expressed in the adult nervous tissue, especially in the forebrain, including the cerebral cortex, hippocampus and thalamus.

Its subcellular location is the mitochondrion. The protein localises to the mitochondrion outer membrane. May regulate the dynamics and distribution of mitochondria in neural cells. This Mus musculus (Mouse) protein is Protein ARMCX6 (Armcx6).